The primary structure comprises 2410 residues: Cell wall alpha-1,3-glucan synthase ags1 (2410 aa).

Phosphoserine is present on residues Ser-1643, Ser-1644, and Ser-1651. Thr-1653 carries the post-translational modification Phosphothreonine. The disordered stretch occupies residues 1685–1706 (SLSLGSRRGPGHTTEDDASDGL). Ser-1738 and Ser-1812 each carry phosphoserine. The interval 1796–1827 (QDDLSDPARSVDSDSVSPPLPPFVAGSNPNAR) is disordered. The segment covering 1802–1827 (PARSVDSDSVSPPLPPFVAGSNPNAR) has biased composition (low complexity).

The protein belongs to the glycosyltransferase group 1 family. As to quaternary structure, interacts with sad1.

It catalyses the reaction [(1-&gt;3)-alpha-D-glucosyl](n) + UDP-alpha-D-glucose = [(1-&gt;3)-alpha-D-glucosyl](n+1) + UDP + H(+). Required for alpha-1,3-glucan and alpha-1,4-glucan production which are required for cell wall synthesis. The chain is Cell wall alpha-1,3-glucan synthase ags1 (ags1) from Schizosaccharomyces pombe (strain 972 / ATCC 24843) (Fission yeast).